We begin with the raw amino-acid sequence, 252 residues long: Hydroxyacylglutathione hydrolase (252 aa).

The Zn(2+) site is built by His-54, His-56, Asp-58, His-59, His-111, Asp-128, and His-166.

Belongs to the metallo-beta-lactamase superfamily. Glyoxalase II family. Monomer. Requires Zn(2+) as cofactor.

It carries out the reaction an S-(2-hydroxyacyl)glutathione + H2O = a 2-hydroxy carboxylate + glutathione + H(+). It participates in secondary metabolite metabolism; methylglyoxal degradation; (R)-lactate from methylglyoxal: step 2/2. Thiolesterase that catalyzes the hydrolysis of S-D-lactoyl-glutathione to form glutathione and D-lactic acid. In Vibrio cholerae serotype O1 (strain ATCC 39541 / Classical Ogawa 395 / O395), this protein is Hydroxyacylglutathione hydrolase.